Consider the following 420-residue polypeptide: uncharacterized protein (420 aa).

A TRAM domain is found at 7 to 65; that stretch reads NIERGSVINVEILNAAHGGQGIAKYDGRVIFVKGAFPGDRLSANITHVKKKFARATIAS. Residues Gln245, Tyr280, Glu304, and Asp349 each contribute to the S-adenosyl-L-methionine site. Residue Cys376 is the Nucleophile of the active site.

Belongs to the class I-like SAM-binding methyltransferase superfamily. RNA M5U methyltransferase family.

This is an uncharacterized protein from Corynebacterium diphtheriae (strain ATCC 700971 / NCTC 13129 / Biotype gravis).